A 420-amino-acid polypeptide reads, in one-letter code: tRNA (guanine-N(7)-)-methyltransferase non-catalytic subunit TRM82 (420 aa).

Residues 59-68 (KENDSKRQKS) are compositionally biased toward basic and acidic residues. Residues 59 to 82 (KENDSKRQKSESGQAKVSKIPTPG) are disordered. WD repeat units lie at residues 87 to 127 (PIYN…DNCL), 179 to 220 (GHVS…VIKN), 224 to 266 (GHHE…AKIE), and 340 to 379 (SYED…EETN).

The protein belongs to the WD repeat TRM82 family. Forms a heterodimer with the catalytic subunit TRM8.

The protein resides in the nucleus. The protein operates within tRNA modification; N(7)-methylguanine-tRNA biosynthesis. Functionally, required for the formation of N(7)-methylguanine at position 46 (m7G46) in tRNA. In the complex, it is required to stabilize and induce conformational changes of the catalytic subunit. This chain is tRNA (guanine-N(7)-)-methyltransferase non-catalytic subunit TRM82, found in Meyerozyma guilliermondii (strain ATCC 6260 / CBS 566 / DSM 6381 / JCM 1539 / NBRC 10279 / NRRL Y-324) (Yeast).